A 509-amino-acid chain; its full sequence is MSLVQIQLKTEDFKIYLQLPVRSQQHNFIYPLLFQEYIYVLVHDRDLKRSIFFANIGYEKKFRFQIVKRLINRMYKQIHLTTYYSNYSNKRTIYGLLKSFYYKLLSSGFSFLFEIPFFFKFISERKKILKSQNLRSIHSIFTFFEDNLSHLKYVLDLLIPNPPHPEILVQKIRYWVQDASSLHLLRFFLHEFCSVKSLITTNKSKRNERFLFLLYNSYICEYESIFLVLRNQSLHLGSMSFVTLFERNIFYGKIECFAELFAQDSQANLRLFKDTDPSMHYARYRGKSILASNGGLLLMPKWKYYIVNFWQCYFYLWFHTERINISQIDSHPFYLMDYISSIAQIPSMVRSKMLENLFLINNDMKIFETFVPIIPIIGSLAKAKFCNLLGNPISKPVWADFSDSDIIERFGRICRNIFHYYSGSSKKRSLYQIKYILRLSCARTLARKHKSTLRGFLQSLGLKLLEEFFTSEEQIIFLTFPNASLNLRGVSKGRIWYFDIVYINEQANF.

It belongs to the intron maturase 2 family. MatK subfamily.

It localises to the plastid. Functionally, usually encoded in the trnK tRNA gene intron. Probably assists in splicing its own and other chloroplast group II introns. This Cuscuta reflexa (Southern Asian dodder) protein is Maturase K.